A 561-amino-acid polypeptide reads, in one-letter code: Dihydroxy-acid dehydratase (561 aa).

Position 51 (C51) interacts with [2Fe-2S] cluster. A Mg(2+)-binding site is contributed by D83. [2Fe-2S] cluster is bound at residue C124. Positions 125 and 126 each coordinate Mg(2+). K126 carries the post-translational modification N6-carboxylysine. C196 serves as a coordination point for [2Fe-2S] cluster. Residue E448 coordinates Mg(2+). The Proton acceptor role is filled by S474.

The protein belongs to the IlvD/Edd family. As to quaternary structure, homodimer. [2Fe-2S] cluster is required as a cofactor. Mg(2+) serves as cofactor.

It carries out the reaction (2R)-2,3-dihydroxy-3-methylbutanoate = 3-methyl-2-oxobutanoate + H2O. It catalyses the reaction (2R,3R)-2,3-dihydroxy-3-methylpentanoate = (S)-3-methyl-2-oxopentanoate + H2O. It functions in the pathway amino-acid biosynthesis; L-isoleucine biosynthesis; L-isoleucine from 2-oxobutanoate: step 3/4. It participates in amino-acid biosynthesis; L-valine biosynthesis; L-valine from pyruvate: step 3/4. In terms of biological role, functions in the biosynthesis of branched-chain amino acids. Catalyzes the dehydration of (2R,3R)-2,3-dihydroxy-3-methylpentanoate (2,3-dihydroxy-3-methylvalerate) into 2-oxo-3-methylpentanoate (2-oxo-3-methylvalerate) and of (2R)-2,3-dihydroxy-3-methylbutanoate (2,3-dihydroxyisovalerate) into 2-oxo-3-methylbutanoate (2-oxoisovalerate), the penultimate precursor to L-isoleucine and L-valine, respectively. The protein is Dihydroxy-acid dehydratase of Pyrobaculum neutrophilum (strain DSM 2338 / JCM 9278 / NBRC 100436 / V24Sta) (Thermoproteus neutrophilus).